A 1052-amino-acid polypeptide reads, in one-letter code: Error-prone DNA polymerase (1052 aa).

The protein belongs to the DNA polymerase type-C family. DnaE2 subfamily.

The protein resides in the cytoplasm. It catalyses the reaction DNA(n) + a 2'-deoxyribonucleoside 5'-triphosphate = DNA(n+1) + diphosphate. DNA polymerase involved in damage-induced mutagenesis and translesion synthesis (TLS). It is not the major replicative DNA polymerase. The protein is Error-prone DNA polymerase of Bordetella parapertussis (strain 12822 / ATCC BAA-587 / NCTC 13253).